A 93-amino-acid polypeptide reads, in one-letter code: Stromal cell-derived factor 1 (93 aa).

Residues 1–21 (MDAKVVAVLALVLAALCLSDG) form the signal peptide. A Receptor activation motif motif is present at residues 22–23 (KP). Residues 29 to 33 (RCPCR) are receptor and heparin binding. Disulfide bonds link Cys-30/Cys-55 and Cys-32/Cys-71. Receptor binding regions lie at residues 39–41 (VAR), 48–50 (KIL), and 60–70 (VARLKNNNRQV). Heparin is bound by residues 41–51 (RANVKHLKILN), Arg-62, Gln-69, and Lys-85.

It belongs to the intercrine alpha (chemokine CxC) family. In terms of assembly, monomer or homodimer; in equilibrium. Dimer formation is induced by non acidic pH and the presence of multivalent anions, and by binding to CXCR4 or heparin. Monomeric form is required for full chemotactic activity and resistance to ischemia/reperfusion injury, whereas the dimeric form acts as a partial agonist of CXCR4, stimulating Ca2+ mobilization but with no chemotactic activity and instead acts as a selective antagonist that blocks chemotaxis induced by the monomeric form. Interacts with the N-terminus of ACKR3. Interacts with integrin subunit ITGB3 (via the allosteric site (site 2)). Interacts with TNFAIP6 (via Link domain).

The protein localises to the secreted. In terms of biological role, chemoattractant active on T-lymphocytes and monocytes but not neutrophils. Activates the C-X-C chemokine receptor CXCR4 to induce a rapid and transient rise in the level of intracellular calcium ions and chemotaxis. Also binds to atypical chemokine receptor ACKR3, which activates the beta-arrestin pathway and acts as a scavenger receptor for SDF-1. Acts as a positive regulator of monocyte migration and a negative regulator of monocyte adhesion via the LYN kinase. Binds to the allosteric site (site 2) of integrins and activates integrins ITGAV:ITGB3, ITGA4:ITGB1 and ITGA5:ITGB1 in a CXCR4-independent manner. Stimulates migration of monocytes and T-lymphocytes through its receptors, CXCR4 and ACKR3, and decreases monocyte adherence to surfaces coated with ICAM-1, a ligand for beta-2 integrins. SDF1A/CXCR4 signaling axis inhibits beta-2 integrin LFA-1 mediated adhesion of monocytes to ICAM-1 through LYN kinase. Plays a protective role after myocardial infarction. Has several critical functions during embryonic development; required for B-cell lymphopoiesis, myelopoiesis in bone marrow and heart ventricular septum formation. Stimulates the proliferation of bone marrow-derived B-cell progenitors in the presence of IL7 as well as growth of stromal cell-dependent pre-B-cells. This is Stromal cell-derived factor 1 (CXCL12) from Felis catus (Cat).